Consider the following 139-residue polypeptide: Gene 22 protein (139 aa).

The sequence is that of Gene 22 protein (22) from Mycobacterium phage D29 (Mycobacteriophage D29).